A 534-amino-acid polypeptide reads, in one-letter code: Benzaldehyde dehydrogenase, mitochondrial (534 aa).

The N-terminal 29 residues, 1–29 (MAAHRFSSLLSRSVPLLSRGGKQSYLGRG), are a transit peptide targeting the mitochondrion. Residues 199 to 202 (IPWN), 225 to 228 (KTAE), 258 to 259 (GP), 278 to 279 (GS), and 301 to 303 (ELG) contribute to the NAD(+) site. Glu-301 functions as the Proton acceptor in the catalytic mechanism. Residue Cys-335 is the Nucleophile of the active site. Residues 381–385 (DQFEK) and 432–434 (EIF) contribute to the NAD(+) site.

The protein belongs to the aldehyde dehydrogenase family. In terms of assembly, homotetramer. In terms of tissue distribution, expressed predominantly in the upper and lower flower petal lobes, and, at low levels, in flower tubes, pistils, stamens and sepals.

The protein resides in the mitochondrion. The enzyme catalyses an aldehyde + NAD(+) + H2O = a carboxylate + NADH + 2 H(+). It carries out the reaction acetaldehyde + NAD(+) + H2O = acetate + NADH + 2 H(+). It catalyses the reaction benzaldehyde + NAD(+) + H2O = benzoate + NADH + 2 H(+). The catalysed reaction is 2-phenylacetaldehyde + NAD(+) + H2O = 2-phenylacetate + NADH + 2 H(+). Its pathway is aromatic compound metabolism. Inhibited by disulfiram. Its function is as follows. Component of the floral volatile benzenoid/phenylpropanoid (FVBP) biosynthetic pathway. Catalyzes the oxidation of benzaldehyde to benzoic acid (BA). Capable of oxidizing a broad spectrum of aliphatic aldehydes; increased carbon chain length results in a decrease in its efficiency. This chain is Benzaldehyde dehydrogenase, mitochondrial, found in Antirrhinum majus (Garden snapdragon).